We begin with the raw amino-acid sequence, 237 residues long: 7-carboxy-7-deazaguanine synthase (237 aa).

Residues leucine 15–glycine 17 and arginine 30 each bind substrate. Residues serine 21–aspartate 233 enclose the Radical SAM core domain. [4Fe-4S] cluster is bound by residues cysteine 34, cysteine 38, and cysteine 48. Threonine 50 contacts Mg(2+). Residue threonine 84 coordinates substrate. Glycine 86 is an S-adenosyl-L-methionine binding site.

It belongs to the radical SAM superfamily. 7-carboxy-7-deazaguanine synthase family. In terms of assembly, homodimer. [4Fe-4S] cluster serves as cofactor. S-adenosyl-L-methionine is required as a cofactor. It depends on Mg(2+) as a cofactor.

The enzyme catalyses 6-carboxy-5,6,7,8-tetrahydropterin + H(+) = 7-carboxy-7-deazaguanine + NH4(+). It participates in purine metabolism; 7-cyano-7-deazaguanine biosynthesis. Functionally, catalyzes the complex heterocyclic radical-mediated conversion of 6-carboxy-5,6,7,8-tetrahydropterin (CPH4) to 7-carboxy-7-deazaguanine (CDG), a step common to the biosynthetic pathways of all 7-deazapurine-containing compounds. The protein is 7-carboxy-7-deazaguanine synthase of Leptospira interrogans serogroup Icterohaemorrhagiae serovar Lai (strain 56601).